Consider the following 86-residue polypeptide: uncharacterized protein (86 aa).

2 consecutive 4Fe-4S ferredoxin-type domains span residues 1-29 (MALL…IGDE) and 31-65 (YVID…PDPE). The [4Fe-4S] cluster site is built by C9, C12, C15, C19, C38, C41, C50, and C54.

It depends on [4Fe-4S] cluster as a cofactor.

This is an uncharacterized protein from Haemophilus influenzae (strain ATCC 51907 / DSM 11121 / KW20 / Rd).